We begin with the raw amino-acid sequence, 106 residues long: Urease subunit beta (106 aa).

The protein belongs to the urease beta subunit family. As to quaternary structure, heterotrimer of UreA (gamma), UreB (beta) and UreC (alpha) subunits. Three heterotrimers associate to form the active enzyme.

The protein localises to the cytoplasm. It catalyses the reaction urea + 2 H2O + H(+) = hydrogencarbonate + 2 NH4(+). It functions in the pathway nitrogen metabolism; urea degradation; CO(2) and NH(3) from urea (urease route): step 1/1. In Synechococcus sp. (strain CC9311), this protein is Urease subunit beta.